Reading from the N-terminus, the 261-residue chain is 3'-5' ssDNA/RNA exonuclease TatD (261 aa).

Residues glutamate 92, histidine 128, and histidine 153 each contribute to the a divalent metal cation site.

The protein belongs to the metallo-dependent hydrolases superfamily. TatD-type hydrolase family. TatD subfamily. As to quaternary structure, monomer. The cofactor is Mg(2+).

The protein localises to the cytoplasm. In terms of biological role, 3'-5' exonuclease that prefers single-stranded DNA and RNA. May play a role in the H(2)O(2)-induced DNA damage repair. The protein is 3'-5' ssDNA/RNA exonuclease TatD of Erwinia billingiae (strain Eb661).